Consider the following 362-residue polypeptide: Phosphoserine aminotransferase (362 aa).

L-glutamate is bound by residues Ser-9 and Arg-42. Residues 76–77, Trp-102, Thr-153, Asp-174, and Gln-197 contribute to the pyridoxal 5'-phosphate site; that span reads GR. An N6-(pyridoxal phosphate)lysine modification is found at Lys-198. 239 to 240 serves as a coordination point for pyridoxal 5'-phosphate; that stretch reads NT.

The protein belongs to the class-V pyridoxal-phosphate-dependent aminotransferase family. SerC subfamily. Homodimer. Requires pyridoxal 5'-phosphate as cofactor.

It is found in the cytoplasm. The enzyme catalyses O-phospho-L-serine + 2-oxoglutarate = 3-phosphooxypyruvate + L-glutamate. It carries out the reaction 4-(phosphooxy)-L-threonine + 2-oxoglutarate = (R)-3-hydroxy-2-oxo-4-phosphooxybutanoate + L-glutamate. It participates in amino-acid biosynthesis; L-serine biosynthesis; L-serine from 3-phospho-D-glycerate: step 2/3. The protein operates within cofactor biosynthesis; pyridoxine 5'-phosphate biosynthesis; pyridoxine 5'-phosphate from D-erythrose 4-phosphate: step 3/5. Catalyzes the reversible conversion of 3-phosphohydroxypyruvate to phosphoserine and of 3-hydroxy-2-oxo-4-phosphonooxybutanoate to phosphohydroxythreonine. This is Phosphoserine aminotransferase from Klebsiella pneumoniae (strain 342).